A 1091-amino-acid chain; its full sequence is Constitutive coactivator of PPAR-gamma-like protein 2 (1091 aa).

The segment covering 35–53 (QQQHLHRQLPPAALAPGAP) has biased composition (low complexity). Disordered regions lie at residues 35–105 (QQQH…HPPP), 503–575 (NCLT…SEPH), 966–1010 (SRSS…QGSS), and 1037–1077 (VEEK…KNHV). Arg57 carries the post-translational modification Omega-N-methylarginine. Positions 82–95 (SRHHHPAHHFHHHG) are enriched in basic residues. The span at 532 to 544 (GSEQITEAVQQQP) shows a compositional bias: polar residues. The segment covering 966–976 (SRSSRSRGSFG) has biased composition (low complexity). At Arg972 the chain carries Omega-N-methylarginine. Residues 1062 to 1077 (SDDHCLPVKNGEKNHV) are compositionally biased toward basic and acidic residues.

This sequence belongs to the constitutive coactivator of PPAR-gamma family.

This chain is Constitutive coactivator of PPAR-gamma-like protein 2 (Fam120c), found in Mus musculus (Mouse).